A 123-amino-acid polypeptide reads, in one-letter code: Large ribosomal subunit protein uL29y (123 aa).

The protein belongs to the universal ribosomal protein uL29 family.

The chain is Large ribosomal subunit protein uL29y (RPL35B) from Arabidopsis thaliana (Mouse-ear cress).